The primary structure comprises 273 residues: 4-hydroxy-tetrahydrodipicolinate reductase (273 aa).

NAD(+) contacts are provided by residues 11–16 and Glu36; that span reads GAGGRM. NADP(+) is bound at residue Arg37. Residues 100-102 and 124-127 contribute to the NAD(+) site; these read GTT and AANY. His157 (proton donor/acceptor) is an active-site residue. His158 serves as a coordination point for (S)-2,3,4,5-tetrahydrodipicolinate. Lys161 serves as the catalytic Proton donor. A (S)-2,3,4,5-tetrahydrodipicolinate-binding site is contributed by 167–168; that stretch reads GT.

This sequence belongs to the DapB family.

It is found in the cytoplasm. The enzyme catalyses (S)-2,3,4,5-tetrahydrodipicolinate + NAD(+) + H2O = (2S,4S)-4-hydroxy-2,3,4,5-tetrahydrodipicolinate + NADH + H(+). It catalyses the reaction (S)-2,3,4,5-tetrahydrodipicolinate + NADP(+) + H2O = (2S,4S)-4-hydroxy-2,3,4,5-tetrahydrodipicolinate + NADPH + H(+). The protein operates within amino-acid biosynthesis; L-lysine biosynthesis via DAP pathway; (S)-tetrahydrodipicolinate from L-aspartate: step 4/4. In terms of biological role, catalyzes the conversion of 4-hydroxy-tetrahydrodipicolinate (HTPA) to tetrahydrodipicolinate. This is 4-hydroxy-tetrahydrodipicolinate reductase from Acinetobacter baumannii (strain ACICU).